We begin with the raw amino-acid sequence, 572 residues long: MLFFLNFFVLVFSIELALLTASAAAEDGSYEIIILHTNDMHARFDQTNAGSNKCQEKDKIASKCYGGFARVSTMVKKFREENGSSVLFLNAGDTYTGTPWFTLYKETIATEMMNILRPDAASLGNHEFDKGVEGLVPFLNGVTFPILTANLDTSQEPTMTNAKNLKRSMIFTVSGHRVGVIGYLTPDTKFLSDVGKVNFIPEVEAINTEAQRLKKEENAEIIIVVGHSGLIKDREIAEKCPLVDIIVGGHSHTFLYTGSQPDREVPVDVYPVVVTQSSGKKVPIVQAYCFTKYLGYFKVTINGKGNVVGWTGQPILLNNNIPQDQEVLTALEKYRERVENYGNRVIGVSRVILNGGHTECRFHECNMGNLITDAFVYANVISTPMSTNAWTDASVVLYQSGGIRAPIDPRTAAGSITRLELDNVLPFGNALYVVKVPGNVLRKALEHSVHRYSNTSGWGEFPQVSGLKIRFNVNEEIGKRVKSVKVLCSNCSQPEYQPLRNKKTYNVIMDSFMKDGGDGYSMFKPLKIIKTLPLGDIETVEAYIEKMGPIFPAVEGRITVLGGLQKSDEDWH.

The N-terminal stretch at 1–25 is a signal peptide; sequence MLFFLNFFVLVFSIELALLTASAAA. 2 residues coordinate Zn(2+): Asp-39 and His-41. A disulfide bridge connects residues Cys-54 and Cys-64. The N-linked (GlcNAc...) asparagine glycan is linked to Asn-82. 4 residues coordinate Zn(2+): Asp-93, Asn-125, His-227, and His-250. Cys-360 and Cys-365 are oxidised to a cystine. Substrate-binding residues include Arg-361, Gln-399, Arg-404, and Phe-427. Residues Asn-454 and Asn-490 are each glycosylated (N-linked (GlcNAc...) asparagine). Cys-488 and Cys-491 are joined by a disulfide. 512–518 lines the substrate pocket; the sequence is FMKDGGD.

The protein belongs to the 5'-nucleotidase family. Zn(2+) is required as a cofactor.

The enzyme catalyses UDP-sugar + H2O = UMP + alpha-D-aldose 1-phosphate.. The catalysed reaction is a ribonucleoside 5'-phosphate + H2O = a ribonucleoside + phosphate. In terms of biological role, degradation of external UDP-glucose to uridine monophosphate and glucose-1-phosphate, which can then be used by the cell. The polypeptide is Protein 5NUC (5NUC) (Lutzomyia longipalpis (Sand fly)).